Consider the following 277-residue polypeptide: Large ribosomal subunit protein uL2 (277 aa).

Disordered stretches follow at residues 32–58 (KSLTKGKKFKSGRDSSGRISIRRRGGG) and 225–277 (VAMN…RRNK). A compositionally biased stretch (basic residues) spans 258-277 (YKTRKKKRYSDKFIIKRRNK).

The protein belongs to the universal ribosomal protein uL2 family. In terms of assembly, part of the 50S ribosomal subunit. Forms a bridge to the 30S subunit in the 70S ribosome.

Functionally, one of the primary rRNA binding proteins. Required for association of the 30S and 50S subunits to form the 70S ribosome, for tRNA binding and peptide bond formation. It has been suggested to have peptidyltransferase activity; this is somewhat controversial. Makes several contacts with the 16S rRNA in the 70S ribosome. The chain is Large ribosomal subunit protein uL2 from Borreliella afzelii (strain PKo) (Borrelia afzelii).